A 683-amino-acid chain; its full sequence is Synaptic vesicle glycoprotein 2B (683 aa).

Over residues 1–10 (MDDYRYRDNY) the composition is skewed to basic and acidic residues. A disordered region spans residues 1–72 (MDDYRYRDNY…QTKMAPSRAD (72 aa)). Over 1–110 (MDDYRYRDNY…ECGHGRFQWT (110 aa)) the chain is Cytoplasmic. Ser33 is modified (phosphoserine). At Thr36 the chain carries Phosphothreonine. Residues 111–131 (LFFVLVLALMADGVEVFVVSF) traverse the membrane as a helical segment. The Extracellular portion of the chain corresponds to 132 to 148 (ALPSAEKDMCLSSSKKG). Residues 149 to 169 (MLGLIVYLGMMAGAFILGGLA) form a helical membrane-spanning segment. Over 170–182 (DKLGRKKVLSMSL) the chain is Cytoplasmic. Residues 183–203 (AINASFASLSSFVQGYGAFLF) form a helical membrane-spanning segment. Over 204–205 (CR) the chain is Extracellular. A helical membrane pass occupies residues 206 to 226 (LISGIGIGGSLPIVFAYFSEF). Residues 227 to 237 (LSREKRGEHLS) lie on the Cytoplasmic side of the membrane. Residues 238–258 (WLGIFWMTGGIYASAMAWSII) traverse the membrane as a helical segment. The Extracellular segment spans residues 259-277 (PHYGWGFSMGTNYHFHSWR). A helical membrane pass occupies residues 278–298 (VFVIVCALPATVSMVALKFMP). Over 299–390 (ESPRFLLEMG…CVMGPYRMNT (92 aa)) the chain is Cytoplasmic. A helical membrane pass occupies residues 391-411 (LILAVVWFTMALSYYGLTVWF). Residues 412-535 (PDMIRYFQDE…CHMDFEEDND (124 aa)) lie on the Extracellular side of the membrane. Tyr423 is modified (phosphotyrosine). N-linked (GlcNAc...) asparagine glycosylation is found at Asn441, Asn491, and Asn516. Residues 536 to 556 (FLIYLVSFLGSLSVLPGNIIS) form a helical membrane-spanning segment. At 557 to 565 (ALLMDRIGR) the chain is on the cytoplasmic side. Residues 566-586 (LKMIGGSMLISAVCCFFLFFG) traverse the membrane as a helical segment. Residues 587–592 (NSESAM) lie on the Extracellular side of the membrane. A helical membrane pass occupies residues 593 to 613 (IGWQCLFCGTSIAAWNALDVI). The Cytoplasmic portion of the chain corresponds to 614–626 (TVELYPTNQRATA). Residues 627 to 649 (FGILNGLCKLGAILGNTIFASFV) form a helical membrane-spanning segment. The Extracellular portion of the chain corresponds to 650–653 (GITK). The chain crosses the membrane as a helical span at residues 654–672 (VVPILLAAASLVGGGLVAL). Residues 673–683 (RLPETREQVLM) are Cytoplasmic-facing.

It belongs to the major facilitator superfamily. In terms of assembly, interacts with SYT1 in a calcium-independent manner. Forms a complex with SYT1, syntaxin-1 and SNAP25. As to quaternary structure, (Microbial infection) Interacts with C.botulinum neurotoxin type A1 and type A2 (BoNT/A, botA). Interaction is improved by glycosylation of SV2. (Microbial infection) Interacts with C.botulinum neurotoxin type D (BoNT/D, botD). In terms of assembly, (Microbial infection) Interacts with C.botulinum neurotoxin type E (BoNT/E). Interaction requires glycosylation of SV2 proteins. As to quaternary structure, (Microbial infection) Interacts with C.botulinum neurotoxin type F (BoNT/F). Interaction requires glycosylation of SV2 proteins. N-glycosylated. In terms of processing, the N-terminal cytoplasmic domain is phosphorylated by CK1. In terms of tissue distribution, widely expressed throughout the brain. Specifically expressed by pinealocytes in the pineal gland. Also detected in testis (at protein level). Specifically expressed in neural tissues. Expressed in the spinal cord and in all brain regions with a stronger expression in hippocampus and cortex.

Its subcellular location is the cytoplasmic vesicle. The protein localises to the secretory vesicle. The protein resides in the synaptic vesicle membrane. It is found in the acrosome. Its function is as follows. Probably plays a role in the control of regulated secretion in neural and endocrine cells. (Microbial infection) Receptor for C.botulinum neurotoxin type A (BoNT/A, botA); the toxin binds via extracellular loop 4. Restores uptake of BoNT/A in mouse and rat cells that are deleted for SV2 receptor. Glycosylation of SV2B is not essential for receptor activity, but enhances the interaction. Also serves as a receptor for the closely related C.botulinum neurotoxin type A2; glycosylation is not essential but enhances the interaction. Functionally, (Microbial infection) Possible receptor for C.botulinum neurotoxin type D (BoNT/D, botD); BoNT/D does not bind to extracellular loop 4 as do BoNT/A and BoNT/E. Another group does not find a convincing interaction with SV2. In terms of biological role, (Microbial infection) Receptor for C.botulinum neurotoxin type E (BoNT/E); the toxin probably binds via extracellular loop 4. Restores uptake of BoNT/E in mouse cells that are deleted for SV2 receptor. Glycosylation of SV2B is not essential for receptor activity, but enhances the interaction. Its function is as follows. (Microbial infection) Receptor for C.botulinum neurotoxin type F (BoNT/F); binding requires glycosylation of this protein. This is Synaptic vesicle glycoprotein 2B (Sv2b) from Rattus norvegicus (Rat).